The sequence spans 210 residues: Proteasome subunit beta (210 aa).

Residues 1–10 (MKELDQLTKG) constitute a propeptide, removed in mature form; by autocatalysis. Threonine 11 functions as the Nucleophile in the catalytic mechanism.

It belongs to the peptidase T1B family. As to quaternary structure, the 20S proteasome core is composed of 14 alpha and 14 beta subunits that assemble into four stacked heptameric rings, resulting in a barrel-shaped structure. The two inner rings, each composed of seven catalytic beta subunits, are sandwiched by two outer rings, each composed of seven alpha subunits. The catalytic chamber with the active sites is on the inside of the barrel. Has a gated structure, the ends of the cylinder being occluded by the N-termini of the alpha-subunits. Is capped at one or both ends by the proteasome regulatory ATPase, PAN.

It localises to the cytoplasm. The enzyme catalyses Cleavage of peptide bonds with very broad specificity.. With respect to regulation, the formation of the proteasomal ATPase PAN-20S proteasome complex, via the docking of the C-termini of PAN into the intersubunit pockets in the alpha-rings, triggers opening of the gate for substrate entry. Interconversion between the open-gate and close-gate conformations leads to a dynamic regulation of the 20S proteasome proteolysis activity. In terms of biological role, component of the proteasome core, a large protease complex with broad specificity involved in protein degradation. This chain is Proteasome subunit beta, found in Methanopyrus kandleri (strain AV19 / DSM 6324 / JCM 9639 / NBRC 100938).